Consider the following 419-residue polypeptide: UDP-N-acetylglucosamine 1-carboxyvinyltransferase (419 aa).

22–23 (KN) is a phosphoenolpyruvate binding site. Arginine 92 contributes to the UDP-N-acetyl-alpha-D-glucosamine binding site. Cysteine 116 (proton donor) is an active-site residue. At cysteine 116 the chain carries 2-(S-cysteinyl)pyruvic acid O-phosphothioketal. Residues 121–125 (RPVDQ), aspartate 306, and isoleucine 328 contribute to the UDP-N-acetyl-alpha-D-glucosamine site.

This sequence belongs to the EPSP synthase family. MurA subfamily.

Its subcellular location is the cytoplasm. The enzyme catalyses phosphoenolpyruvate + UDP-N-acetyl-alpha-D-glucosamine = UDP-N-acetyl-3-O-(1-carboxyvinyl)-alpha-D-glucosamine + phosphate. It functions in the pathway cell wall biogenesis; peptidoglycan biosynthesis. Its function is as follows. Cell wall formation. Adds enolpyruvyl to UDP-N-acetylglucosamine. Target for the antibiotic phosphomycin. This is UDP-N-acetylglucosamine 1-carboxyvinyltransferase from Acinetobacter guillouiae (Acinetobacter genomosp. 11).